Here is a 371-residue protein sequence, read N- to C-terminus: Phospho-N-acetylmuramoyl-pentapeptide-transferase (371 aa).

The next 9 helical transmembrane spans lie at 19 to 39, 48 to 68, 95 to 115, 119 to 139, 155 to 175, 180 to 200, 227 to 247, 284 to 304, and 349 to 369; these read LYWL…IYSG, IVAP…WAVP, TMGG…WVAA, NLLE…VGWF, AKLR…WLFL, ISGL…FLAI, AIAF…LMIF, AVGL…LFLV, and VVST…GLNA.

The protein belongs to the glycosyltransferase 4 family. MraY subfamily. It depends on Mg(2+) as a cofactor.

Its subcellular location is the cell inner membrane. The catalysed reaction is UDP-N-acetyl-alpha-D-muramoyl-L-alanyl-gamma-D-glutamyl-meso-2,6-diaminopimeloyl-D-alanyl-D-alanine + di-trans,octa-cis-undecaprenyl phosphate = di-trans,octa-cis-undecaprenyl diphospho-N-acetyl-alpha-D-muramoyl-L-alanyl-D-glutamyl-meso-2,6-diaminopimeloyl-D-alanyl-D-alanine + UMP. It functions in the pathway cell wall biogenesis; peptidoglycan biosynthesis. In terms of biological role, catalyzes the initial step of the lipid cycle reactions in the biosynthesis of the cell wall peptidoglycan: transfers peptidoglycan precursor phospho-MurNAc-pentapeptide from UDP-MurNAc-pentapeptide onto the lipid carrier undecaprenyl phosphate, yielding undecaprenyl-pyrophosphoryl-MurNAc-pentapeptide, known as lipid I. This Acaryochloris marina (strain MBIC 11017) protein is Phospho-N-acetylmuramoyl-pentapeptide-transferase.